The following is a 961-amino-acid chain: E4 ubiquitin-protein ligase UFD2 (961 aa).

Residues 880–954 (DVPDEFLDPL…LCFKKQKKEE (75 aa)) enclose the U-box domain.

This sequence belongs to the ubiquitin conjugation factor E4 family. As to quaternary structure, interacts with CDC48. Interacts with the ubiquitin-like domain of RAD23 and DSK2. Interacts with PEX29.

It is found in the cytoplasm. Its subcellular location is the nucleus. The enzyme catalyses S-ubiquitinyl-[E2 ubiquitin-conjugating enzyme]-L-cysteine + [acceptor protein]-L-lysine = [E2 ubiquitin-conjugating enzyme]-L-cysteine + N(6)-ubiquitinyl-[acceptor protein]-L-lysine.. Its pathway is protein modification; protein ubiquitination. In terms of biological role, E4 ubiquitin chain-elongation enzyme specifically involved in polyubiquitin chain assembly. Binds to CDC48 and elongates mono- and diubiquitinated ERAD substrates presented by the UFD1-NPL4-CDC48/p97 (UNC) AAA ATPase complex to a chain length of 4 to 6 ubiquitin moieties. Delivers these polyubiquitinated substrates to RAD23 and DSK2, which target them to the proteasome. Has E3 ubiquitin-protein ligase activity, accepting ubiquitin from its cognate E2 ubiquitin-conjugating enzyme UBC4. Enhances ubiquitination at 'Lys-48', but not at 'Lys-29' of the Ub moiety. Promotes ubiquitin chain elongation at 'Lys-48' on the DOA10 substrate PEX29. Also involved in the proteolytic processing of the ER-bound transcription factor SPT23. The polypeptide is E4 ubiquitin-protein ligase UFD2 (UFD2) (Saccharomyces cerevisiae (strain ATCC 204508 / S288c) (Baker's yeast)).